A 1091-amino-acid chain; its full sequence is LRR receptor-like serine/threonine-protein kinase RGI3 (1091 aa).

The N-terminal stretch at 1 to 24 (MPPNIYRLSFFSSLLCFFFIPCFS) is a signal peptide. Residues 25–703 (LDQQGQALLS…TTRNSSVVRL (679 aa)) are Extracellular-facing. Residues 33 to 56 (LSWKSQLNISGDAFSSWHVADTSP) form an LRR 1 repeat. A glycan (N-linked (GlcNAc...) asparagine) is linked at Asn40. Cysteines 57 and 64 form a disulfide. LRR repeat units lie at residues 67 to 91 (RGEV…SLRS), 92 to 115 (LKSL…EIGD), 116 to 140 (FTEL…IFRL), 142 to 166 (KLKT…NLSG), 168 to 188 (VELM…IGEL), 190 to 213 (NLQV…IGNC), 214 to 237 (ENLV…IGNL), 239 to 261 (RVQT…IGYC), 262 to 285 (TELQ…IGGL), 287 to 309 (KLQS…LGNC), 311 to 332 (ELWL…SFGK), 333 to 357 (LENL…LTNC), 359 to 383 (KLTH…NLRS), 385 to 405 (TMFF…LSQC), 406 to 429 (RELQ…IFGL), 431 to 453 (NLTK…IGNC), 454 to 477 (TNLY…IGNL), 478 to 501 (KNLN…ISGC), 503 to 524 (SLEF…TTLP), 525 to 548 (KSLK…IGLL), 549 to 572 (TELT…ISTC), 574 to 596 (SLQL…LGQI), 598 to 620 (SLAI…RFSD), 621 to 644 (LKNL…LTDL), 645 to 668 (QNLV…PFFR), and 669 to 690 (RLPL…ISTR). Residue Asn104 is glycosylated (N-linked (GlcNAc...) asparagine). The N-linked (GlcNAc...) asparagine glycan is linked to Asn163. 5 short sequence motifs (small peptide recognition) span residues 173–174 (FD), 195–198 (RAGG), 218–223 (MLGLAE), Tyr246, and 268–270 (YLY). 2 short sequence motifs (small peptide recognition) span residues 316–319 (DFSE) and 338–340 (ELQ). The N-linked (GlcNAc...) asparagine glycan is linked to Asn356. 2 short sequence motifs (small peptide recognition) span residues 386 to 390 (MFFAW) and 412 to 415 (DLSY). Asn431 is a glycosylation site (N-linked (GlcNAc...) asparagine). The Small peptide recognition signature appears at 434–438 (KLLLL). An N-linked (GlcNAc...) asparagine glycan is attached at Asn452. Residues 458-460 (RLR) carry the Small peptide recognition motif. Residue Asn604 is glycosylated (N-linked (GlcNAc...) asparagine). An N-linked (GlcNAc...) asparagine glycan is attached at Asn651. N-linked (GlcNAc...) asparagine glycosylation is present at Asn697. Residues 704–724 (TILILVVVTAVLVLMAVYTLV) form a helical membrane-spanning segment. Topologically, residues 725–1091 (RARAAGKQLL…CSFAFSDDSV (367 aa)) are cytoplasmic. The Protein kinase domain occupies 760–1046 (LTSANVIGTG…MLTEIRHIDV (287 aa)). ATP-binding positions include 766-774 (IGTGSSGVV) and Lys788. Phosphotyrosine is present on residues Tyr831 and Tyr870. Asp883 acts as the Proton acceptor in catalysis. Tyr933 is subject to Phosphotyrosine.

It belongs to the protein kinase superfamily. Ser/Thr protein kinase family. Binds to RGF peptides such as RGF1, GLV5/CLEL1/RGF2, GLV7/CLEL3/RGF3, GLV3/RGF4, GLV10/CLEL7/RGF5 and RGF10/CLELN; these interactions trigger the formation of heterodimers with SERK1, SERK2 or BAK1/SERK3 via LRR regions. Post-translationally, phosphorylated and ubiquitinated upon interaction with RGF1, thus leading to activation a subsequent degradation. Autophosphorylated. As to expression, expressed in roots.

It is found in the cell membrane. The catalysed reaction is L-seryl-[protein] + ATP = O-phospho-L-seryl-[protein] + ADP + H(+). It catalyses the reaction L-threonyl-[protein] + ATP = O-phospho-L-threonyl-[protein] + ADP + H(+). In terms of biological role, together with RGI1, RGI2, RGI4 and RGI5, acts as a receptor of RGF peptides (e.g. RGF1, GLV5/CLEL1/RGF2, GLV7/CLEL3/RGF3, GLV3/RGF4, GLV10/CLEL7/RGF5 and RGF10/CLELN), peptide hormones which maintain the postembryonic root stem cell niche by regulating the expression levels and patterns of the transcription factor PLETHORA (PLT, e.g. PLT1 and PLT2). Links RGF peptides signal with their downstream components. This chain is LRR receptor-like serine/threonine-protein kinase RGI3, found in Arabidopsis thaliana (Mouse-ear cress).